The sequence spans 343 residues: Dihydroorotase (343 aa).

Zn(2+)-binding residues include histidine 13 and histidine 15. Substrate contacts are provided by residues 15 to 17 and asparagine 41; that span reads HLR. Positions 99, 136, and 174 each coordinate Zn(2+). Residue lysine 99 is modified to N6-carboxylysine. Substrate is bound at residue histidine 136. Position 219 (leucine 219) interacts with substrate. Residue aspartate 247 participates in Zn(2+) binding. The active site involves aspartate 247. Residues histidine 251 and alanine 263 each coordinate substrate.

This sequence belongs to the metallo-dependent hydrolases superfamily. DHOase family. Class II DHOase subfamily. As to quaternary structure, homodimer. It depends on Zn(2+) as a cofactor.

The catalysed reaction is (S)-dihydroorotate + H2O = N-carbamoyl-L-aspartate + H(+). The protein operates within pyrimidine metabolism; UMP biosynthesis via de novo pathway; (S)-dihydroorotate from bicarbonate: step 3/3. In terms of biological role, catalyzes the reversible cyclization of carbamoyl aspartate to dihydroorotate. The sequence is that of Dihydroorotase from Shewanella baltica (strain OS223).